Here is a 391-residue protein sequence, read N- to C-terminus: UPF0229 protein BCA_0588 (391 aa).

Residues 1–16 (MGEENQPNYTISQENW) show a composition bias toward polar residues. 2 disordered regions span residues 1 to 31 (MGEENQPNYTISQENWSLHRKGYDDQQRHQE) and 80 to 117 (HVGQGNGDSKVGDVVARDGSGGQKQKGPGKGQGAGDAA). The segment covering 21–31 (KGYDDQQRHQE) has biased composition (basic and acidic residues). Gly residues predominate over residues 98 to 115 (GSGGQKQKGPGKGQGAGD).

This sequence belongs to the UPF0229 family.

This Bacillus cereus (strain 03BB102) protein is UPF0229 protein BCA_0588.